Here is a 373-residue protein sequence, read N- to C-terminus: Indole glucosinolate O-methyltransferase 2 (373 aa).

S-adenosyl-L-homocysteine contacts are provided by glycine 217, aspartate 240, aspartate 260, methionine 261, and lysine 274. Catalysis depends on histidine 278, which acts as the Proton acceptor.

It belongs to the class I-like SAM-binding methyltransferase superfamily. Cation-independent O-methyltransferase family.

It functions in the pathway secondary metabolite biosynthesis. Involved in indole glucosinolate biosynthesis. Catalyzes methoxylation reactions of the glucosinolate indole ring. Converts the hydroxy intermediates 4-hydroxy-indol-3-yl-methylglucosinolate (4OH-I3M) and 1-hydroxy-indol-3-yl-methylglucosinolate (1OH-I3M) to 4-methoxy-indol-3-yl-methylglucosinolate (4MO-I3M) and 1-methoxy-indol-3-yl-methylglucosinolate (1MO-I3M), respectively. The polypeptide is Indole glucosinolate O-methyltransferase 2 (Arabidopsis thaliana (Mouse-ear cress)).